Consider the following 129-residue polypeptide: Small ribosomal subunit protein uS11 (129 aa).

The protein belongs to the universal ribosomal protein uS11 family. Part of the 30S ribosomal subunit. Interacts with proteins S7 and S18. Binds to IF-3.

Functionally, located on the platform of the 30S subunit, it bridges several disparate RNA helices of the 16S rRNA. Forms part of the Shine-Dalgarno cleft in the 70S ribosome. In Cereibacter sphaeroides (strain ATCC 17029 / ATH 2.4.9) (Rhodobacter sphaeroides), this protein is Small ribosomal subunit protein uS11.